A 238-amino-acid polypeptide reads, in one-letter code: DNA repair protein RecO (238 aa).

It belongs to the RecO family.

In terms of biological role, involved in DNA repair and RecF pathway recombination. This Anaplasma marginale (strain Florida) protein is DNA repair protein RecO.